A 256-amino-acid polypeptide reads, in one-letter code: Peroxisomal membrane protein PMP30B (256 aa).

This sequence belongs to the peroxin-11 family.

The protein localises to the peroxisome membrane. In terms of biological role, involved in peroxisomal proliferation. Could participate in peroxisomal elongation or fission. May be involved in parceling of peroxisomes into regular quanta. The chain is Peroxisomal membrane protein PMP30B (PEX11B) from Candida boidinii (Yeast).